The chain runs to 1473 residues: NACHT, LRR and PYD domains-containing protein 1 (1473 aa).

Residues 1–92 (MAGGAWGRLA…CAQAQEGAGH (92 aa)) enclose the Pyrin domain. The segment at 90 to 113 (AGHSPSFPYSPSEPHLGSPSQPTS) is disordered. 3 positions are modified to phosphoserine; by MAPK11 and MAPK14: serine 93, serine 99, and serine 101. Serine 107 bears the Phosphoserine; by MAPK14 mark. Residues 111 to 117 (PTSTAVL) carry the ZAKalpha motif 1 motif. Threonine 112 is subject to Phosphothreonine; by MAPK11, MAPK14 and MAP3K20. Serine 113 carries the phosphoserine; by MAP3K20 modification. A phosphothreonine; by MAP3K20 mark is found at threonine 114 and threonine 129. Serine 132 carries the phosphoserine; by MAP3K20 modification. The interval 160-254 (LPSSPDHESP…HTSLQPHHHP (95 aa)) is disordered. Residue serine 163 is modified to Phosphoserine; by MAPK14. The residue at position 168 (serine 168) is a Phosphoserine; by MAPK11 and MAPk14. Position 170 is a phosphoserine; by MAPK11 and MAPK14 (serine 170). Residues 170–182 (SQESPNAPTSTAV) show a composition bias toward polar residues. Serine 173 carries the post-translational modification Phosphoserine; by MAPK11. A ZAKalpha motif 2 motif is present at residues 177–183 (PTSTAVL). Threonine 178 carries the post-translational modification Phosphothreonine; by MAPK11. The residue at position 179 (serine 179) is a Phosphoserine; by MAPK11 and MAP3K20. Threonine 180 is modified (phosphothreonine; by MAPK11 and MAP3K20). Residues 218–231 (EIREREREKSEKGR) show a composition bias toward basic and acidic residues. The NACHT domain maps to 328-637 (RIVILQGAAG…EFFAAMSYVL (310 aa)). 334 to 341 (GAAGIGKS) contributes to the ATP binding site. LRR repeat units lie at residues 809–830 (NLKE…SLCK), 838–858 (LLET…KDLA), 866–887 (TLTE…HLCQ), 895–915 (KLQR…QDLA), 923–944 (SLKE…LLCE), and 950–973 (ACKL…ELRA). Residues 991-1017 (VMTPTEGLDTGEMSNSTSSLKRQRLGS) form a disordered region. The tract at residues 1079 to 1212 (FWGPTGPVAT…HHIVLENPSF (134 aa)) is ZU5. Positions 1079–1364 (FWGPTGPVAT…LMPATTLIPP (286 aa)) constitute an FIIND domain. The interval 1213–1364 (SPLGVLLKMI…LMPATTLIPP (152 aa)) is UPA. The 90-residue stretch at 1374–1463 (DAPQLLHFVD…HLIMELWEKG (90 aa)) folds into the CARD domain.

The protein belongs to the NLRP family. As to quaternary structure, interacts (via LRR repeats) with BCL2 and BCL2L1 (via the loop between motifs BH4 and BH3); these interactions reduce NLRP1 inflammasome-induced CASP1 activation and IL1B release, possibly by impairing NLRP1 interaction with PYCARD. Interacts with NOD2; this interaction is enhanced in the presence of muramyl dipeptide (MDP) and increases IL1B release. Interacts with EIF2AK2/PKR; this interaction requires EIF2AK2 activity, is accompanied by EIF2AK2 autophosphorylation and promotes inflammasome assembly in response to danger-associated signals. Interacts with MEFV; this interaction targets NLRP1 to degradation by autophagy, hence preventing excessive IL1B- and IL18-mediated inflammation. Binds (via LRR domain) to dsDNA and dsRNA. Interacts with DPP9; leading to inhibit activation of the inflammasome. DPP9 acts via formation of a ternary complex, composed of a DPP9 homodimer, one full-length NLRP1 protein, and one cleaved C-terminus of NLRP1 (NACHT, LRR and PYD domains-containing protein 1, C-terminus). Interacts with DPP8; leading to inhibit activation of the inflammasome, probably via formation of a ternary complex with DPP8. In terms of assembly, interacts with the C-terminal part of NLRP1 (NACHT, LRR and PYD domains-containing protein 1, C-terminus) in absence of pathogens and other damage-associated signals. Interacts with the N-terminal part of NLRP1 (NACHT, LRR and PYD domains-containing protein 1, N-terminus) in absence of pathogens and other damage-associated signals. Homomultimer; forms the NLRP1 inflammasome polymeric complex, a filament composed of homopolymers of this form in response to pathogens and other damage-associated signals. The NLRP1 inflammasome polymeric complex associates with PYCARD/ASC. Interacts (via CARD domain) with PYCARD/ASC (via CARD domain); leading to pro-caspase-1 (proCASP1) recruitment. Pro-caspase-1 (proCASP1) filament formation increases local enzyme concentration, resulting in trans-autocleavage and activation. Active CASP1 then processes IL1B and IL18 precursors, leading to the release of mature cytokines in the extracellular milieu and inflammatory response. As to quaternary structure, (Microbial infection) Interacts with vaccinia virus protein F1. In terms of assembly, (Microbial infection) Interacts with human herpes virus 8/HHV-8 proteins ORF45; relieving autoinhibition of the NLRP1 inflammasome. Autocatalytically cleaved. Autocatalytic cleavage in FIIND region occurs constitutively, prior to activation signals, and is required for inflammasome activity (IL1B release), possibly by facilitating CASP1 binding. Both N- and C-terminal parts remain associated non-covalently. Post-translationally, ubiquitinated by the cullin:ZER1/ZYG11B complex in response to pathogen-associated signals, leading to its degradation by the proteasome and subsequent release of the cleaved C-terminal part of the protein (NACHT, LRR and PYD domains-containing protein 1, C-terminus), which polymerizes and forms the NLRP1 inflammasome. In terms of processing, phosphorylated by MAP3K20 isoform ZAKalpha, MAPK11 and MAPK14 in response to UV-B irradiation and ribosome collisions, promoting activation of the NLRP1 inflammasome and pyroptosis. (Microbial infection) Cleaved between Gln-130 and Gly-131 by the Protease 3C from various human enteroviruses and rhinoviruses (EV68, EV71, Coxsackievirus B3, HRV-14 and HRV-16). This cleavage triggers N-glycine-mediated proteasomal degradation of the autoinhibitory NLRP1 N-terminal fragment via the cullin:ZER1/ZYG11B complex which liberates the activating C-terminal fragment and activates NLRP1 inflammasome. Post-translationally, (Microbial infection) Cleaved between Gln-333 and Gly-334 by the 3C-like proteinase nsp5 from human coronavirus SARS-CoV-2. This cleavage liberates the activating C-terminal fragment and activates NLRP1 inflammasome, leading to downstream activation of GSDME and lung epithelial cell death. In terms of tissue distribution, widely expressed. Abundantly expressed in primary immune cells (isoform 1 and isoform 2), including in neutrophils, monocytes/macrophages, dendritic cells (mostly Langerhans cells), and B- and T-lymphocytes (at protein level). Strongly expressed in epithelial cells lining the glandular epithelium, such as that of the gastrointestinal tract (stomach, small intestine, colon), the respiratory tract (trachea and bronchi), and the endometrial and endocervical glands, gallbladder, prostate, and breast (at protein level). In testis, expressed in spermatogonia and primary spermatocytes, but not in Sertoli cells (at protein level). In the brain, expressed in neurons, in particular in pyramidal ones and in oligodendrocytes, but not detected in microglia (at protein level). Expressed in adult and fetal ocular tissues, including in adult and 24-week old fetal choroid, sclera, cornea, and optic nerve, as well as in adult retina and fetal retina/retinal pigment epithelium. Highly expressed in the skin throughout the epidermis and in dermal fibroblasts, in both glabrous skin and plantar skin. It is detected in keratinocytes, but not in melanocytes. Expressed in epidermal appendages such as hair follicles.

It localises to the cytoplasm. It is found in the cytosol. The protein localises to the nucleus. The protein resides in the inflammasome. The enzyme catalyses ATP + H2O = ADP + phosphate + H(+). NLRP1 inflammasome is activated by cleavage by the Protease 3C from various human enteroviruses and rhinoviruses (EV68, EV71, Coxsackievirus B3, HRV-14 and HRV-16): cleavage promotes ubiquitination and degradation of the N-terminal part, releasing the cleaved C-terminal part of the protein (NACHT, LRR and PYD domains-containing protein 1, C-terminus), which polymerizes and forms the NLRP1 inflammasome. Activated double-stranded RNA: positive-strand RNA viruses such as Semliki forest virus and long dsRNA activate the NLRP1 inflammasome. In contrast to its mouse ortholog, not activated by Bacillus anthracis lethal toxin. NLRP1 inflammasome is inhibited by DPP8 and DPP9, which sequester the C-terminal fragment of NLRP1 (NACHT, LRR and PYD domains-containing protein 1, C-terminus) in a ternary complex, thereby preventing NLRP1 oligomerization and activation. NLRP1 inflammasome is activated by Val-boroPro (Talabostat, PT-100), an inhibitor of dipeptidyl peptidases DPP8 and DPP9. Val-boroPro relieves inhibition of DPP8 and/or DPP9 by promoting disruption of the ternary complex, releasing its C-terminal part from autoinhibition. ATPase activity is activated by dsRNA-binding but not dsDNA-binding. With respect to regulation, (Microbial infection) The NLRP1 inflammasome is activated by human herpes virus 8/HHV-8 protein ORF45, which interacts with the N-terminal part of NLRP1 and promotes its translocation into the nucleus, relieving autoinhibition and leading to activation. Its activity is regulated as follows. (Microbial infection) NLRP1 inflammasome is activated by cleavage by the 3C-like proteinase nsp5 from human coronavirus SARS-CoV-2. Its function is as follows. Acts as the sensor component of the NLRP1 inflammasome, which mediates inflammasome activation in response to various pathogen-associated signals, leading to subsequent pyroptosis. Inflammasomes are supramolecular complexes that assemble in the cytosol in response to pathogens and other damage-associated signals and play critical roles in innate immunity and inflammation. Acts as a recognition receptor (PRR): recognizes specific pathogens and other damage-associated signals, such as cleavage by some human enteroviruses and rhinoviruses, double-stranded RNA, UV-B irradiation, or Val-boroPro inhibitor, and mediates the formation of the inflammasome polymeric complex composed of NLRP1, CASP1 and PYCARD/ASC. In response to pathogen-associated signals, the N-terminal part of NLRP1 is degraded by the proteasome, releasing the cleaved C-terminal part of the protein (NACHT, LRR and PYD domains-containing protein 1, C-terminus), which polymerizes and associates with PYCARD/ASC to initiate the formation of the inflammasome complex: the NLRP1 inflammasome recruits pro-caspase-1 (proCASP1) and promotes caspase-1 (CASP1) activation, which subsequently cleaves and activates inflammatory cytokines IL1B and IL18 and gasdermin-D (GSDMD), leading to pyroptosis. In the absence of GSDMD expression, the NLRP1 inflammasome is able to recruit and activate CASP8, leading to activation of gasdermin-E (GSDME). Activation of NLRP1 inflammasome is also required for HMGB1 secretion; the active cytokines and HMGB1 stimulate inflammatory responses. Binds ATP and shows ATPase activity. Plays an important role in antiviral immunity and inflammation in the human airway epithelium. Specifically recognizes a number of pathogen-associated signals: upon infection by human rhinoviruses 14 and 16 (HRV-14 and HRV-16), NLRP1 is cleaved and activated which triggers NLRP1-dependent inflammasome activation and IL18 secretion. Positive-strand RNA viruses, such as Semliki forest virus and long dsRNA activate the NLRP1 inflammasome, triggering IL1B release in a NLRP1-dependent fashion. Acts as a direct sensor for long dsRNA and thus RNA virus infection. May also be activated by muramyl dipeptide (MDP), a fragment of bacterial peptidoglycan, in a NOD2-dependent manner. The NLRP1 inflammasome is also activated in response to UV-B irradiation causing ribosome collisions: ribosome collisions cause phosphorylation and activation of NLRP1 in a MAP3K20-dependent manner, leading to pyroptosis. In terms of biological role, constitutes the precursor of the NLRP1 inflammasome, which mediates autoproteolytic processing within the FIIND domain to generate the N-terminal and C-terminal parts, which are associated non-covalently in absence of pathogens and other damage-associated signals. Regulatory part that prevents formation of the NLRP1 inflammasome: in absence of pathogens and other damage-associated signals, interacts with the C-terminal part of NLRP1 (NACHT, LRR and PYD domains-containing protein 1, C-terminus), preventing activation of the NLRP1 inflammasome. In response to pathogen-associated signals, this part is ubiquitinated and degraded by the proteasome, releasing the cleaved C-terminal part of the protein, which polymerizes and forms the NLRP1 inflammasome. Functionally, constitutes the active part of the NLRP1 inflammasome. In absence of pathogens and other damage-associated signals, interacts with the N-terminal part of NLRP1 (NACHT, LRR and PYD domains-containing protein 1, N-terminus), preventing activation of the NLRP1 inflammasome. In response to pathogen-associated signals, the N-terminal part of NLRP1 is degraded by the proteasome, releasing this form, which polymerizes and associates with PYCARD/ASC to form of the NLRP1 inflammasome complex: the NLRP1 inflammasome complex then directly recruits pro-caspase-1 (proCASP1) and promotes caspase-1 (CASP1) activation, leading to gasdermin-D (GSDMD) cleavage and subsequent pyroptosis. Its function is as follows. It is unclear whether is involved in inflammasome formation. It is not cleaved within the FIIND domain, does not assemble into specks, nor promote IL1B release. However, in an vitro cell-free system, it has been shown to be activated by MDP. This is NACHT, LRR and PYD domains-containing protein 1 from Homo sapiens (Human).